The primary structure comprises 309 residues: Olfactory receptor 7A40 (309 aa).

Residues 1 to 26 (MELKNDTQISKFILLGISEDPLWQPF) lie on the Extracellular side of the membrane. The N-linked (GlcNAc...) asparagine glycan is linked to Asn-5. A helical transmembrane segment spans residues 27–47 (LFGLFLFMYLVTLLGNLLIII). Topologically, residues 48–57 (ATITDSHLHT) are cytoplasmic. A helical transmembrane segment spans residues 58 to 78 (PMYFFLSNLSFADICFTSASI). The Extracellular portion of the chain corresponds to 79–97 (PKMLVNIQTKNKVITYEGC). A disulfide bond links Cys-97 and Cys-179. A helical membrane pass occupies residues 98–118 (ISQVFFFILFGVLDNFLLAVM). Topologically, residues 119 to 139 (AYDRYVAICHPLHYMVIMNCR) are cytoplasmic. Residues 140–160 (LCGFLVLGSWVTTALNSLLQS) traverse the membrane as a helical segment. Residues 161–196 (SMALRLSFCTDLKIPHFVCELNQLVLLACNDTFPND) lie on the Extracellular side of the membrane. A helical membrane pass occupies residues 197–217 (MVMYFAAILLGGGPLAGILYS). At 218–244 (YSKIVSSIRAISSSQGKYKAFSTCASH) the chain is on the cytoplasmic side. Residues 245 to 265 (LSVVSLFYSTLLGVYLSSSFT) traverse the membrane as a helical segment. Residues 266–269 (QNSH) are Extracellular-facing. The helical transmembrane segment at 270–292 (STARASVMYSVVTPMLNPFIYSL) threads the bilayer. At 293-309 (RNKDLMGALRRLLRRKS) the chain is on the cytoplasmic side.

Belongs to the G-protein coupled receptor 1 family.

It localises to the cell membrane. Functionally, odorant receptor. The chain is Olfactory receptor 7A40 from Mus musculus (Mouse).